A 293-amino-acid chain; its full sequence is ATP synthase subunit a (293 aa).

6 consecutive transmembrane segments (helical) span residues 40–60 (DSLF…WLAA), 98–118 (FVAP…ALDL), 151–171 (DLNV…YYGI), 188–208 (FHAH…LNLI), 225–245 (MFAG…WTGF), and 264–284 (AIFH…LTLV).

It belongs to the ATPase A chain family. In terms of assembly, F-type ATPases have 2 components, CF(1) - the catalytic core - and CF(0) - the membrane proton channel. CF(1) has five subunits: alpha(3), beta(3), gamma(1), delta(1), epsilon(1). CF(0) has three main subunits: a(1), b(2) and c(9-12). The alpha and beta chains form an alternating ring which encloses part of the gamma chain. CF(1) is attached to CF(0) by a central stalk formed by the gamma and epsilon chains, while a peripheral stalk is formed by the delta and b chains.

It localises to the cell inner membrane. Key component of the proton channel; it plays a direct role in the translocation of protons across the membrane. The polypeptide is ATP synthase subunit a (Bordetella avium (strain 197N)).